We begin with the raw amino-acid sequence, 305 residues long: L-lactate dehydrogenase (305 aa).

Residues Val11, Asp32, Lys37, and Gly76 to Val77 each bind NAD(+). Residues Gln79, Arg85, and Asn117–Asp120 each bind substrate. NAD(+) is bound by residues Ala115–Asn117 and Ser140. Asp145–Arg148 lines the substrate pocket. Beta-D-fructose 1,6-bisphosphate contacts are provided by Arg150 and His165. Catalysis depends on His172, which acts as the Proton acceptor. Phosphotyrosine is present on Tyr218. Thr227 contributes to the substrate binding site.

The protein belongs to the LDH/MDH superfamily. LDH family. Homotetramer.

It localises to the cytoplasm. It catalyses the reaction (S)-lactate + NAD(+) = pyruvate + NADH + H(+). The protein operates within fermentation; pyruvate fermentation to lactate; (S)-lactate from pyruvate: step 1/1. Its activity is regulated as follows. Allosterically activated by fructose 1,6-bisphosphate (FBP). Its function is as follows. Catalyzes the conversion of lactate to pyruvate. This is L-lactate dehydrogenase from Chloroherpeton thalassium (strain ATCC 35110 / GB-78).